Reading from the N-terminus, the 291-residue chain is N-acetylmannosamine kinase (291 aa).

ATP-binding positions include A5–K12 and G132–V139. Zn(2+) is bound by residues H156, C166, C168, and C173.

The protein belongs to the ROK (NagC/XylR) family. NanK subfamily. Homodimer.

The enzyme catalyses an N-acyl-D-mannosamine + ATP = an N-acyl-D-mannosamine 6-phosphate + ADP + H(+). The protein operates within amino-sugar metabolism; N-acetylneuraminate degradation; D-fructose 6-phosphate from N-acetylneuraminate: step 2/5. In terms of biological role, catalyzes the phosphorylation of N-acetylmannosamine (ManNAc) to ManNAc-6-P. The sequence is that of N-acetylmannosamine kinase (nanK2) from Escherichia coli O6:H1 (strain CFT073 / ATCC 700928 / UPEC).